The following is an 84-amino-acid chain: uncharacterized protein (84 aa).

It to M.jannaschii MJ1121.

This is an uncharacterized protein from Archaeoglobus fulgidus (strain ATCC 49558 / DSM 4304 / JCM 9628 / NBRC 100126 / VC-16).